The following is a 237-amino-acid chain: UPF0173 metal-dependent hydrolase HQ_3368A (237 aa).

The protein belongs to the UPF0173 family.

The polypeptide is UPF0173 metal-dependent hydrolase HQ_3368A (Haloquadratum walsbyi (strain DSM 16790 / HBSQ001)).